Here is a 446-residue protein sequence, read N- to C-terminus: Sphingomyelinase phosphodiesterase C (446 aa).

The signal sequence occupies residues 1-26 (MKFRNNLTLYLIFIIVFTIYISLTIS). The N-linked (GlcNAc...) asparagine glycan is linked to Asn6. 2 residues coordinate Zn(2+): Asp39 and His41. The cysteines at positions 56 and 78 are disulfide-linked. Asp107 is a binding site for Zn(2+). N-linked (GlcNAc...) asparagine glycans are attached at residues Asn118 and Asn128. A Zn(2+)-binding site is contributed by Asn148. N-linked (GlcNAc...) asparagine glycans are attached at residues Asn178, Asn217, Asn229, and Asn234. Zn(2+) is bound by residues His247, His287, and His289. Residues Asn342 and Asn357 are each glycosylated (N-linked (GlcNAc...) asparagine). A disulfide bridge links Cys429 with Cys442.

It belongs to the acid sphingomyelinase family. Zn(2+) is required as a cofactor.

The protein localises to the secreted. This is Sphingomyelinase phosphodiesterase C (sgmC) from Dictyostelium discoideum (Social amoeba).